Here is a 251-residue protein sequence, read N- to C-terminus: MAGHSKWATTKHKKAANDAKRGKEFAKLIKNIEVAARTGGGDPSANPTLQDAITKAKKSSVPNDNIERARKRGSGEEAGGANWETIMYEGYGPNGVAMLIECLTDNRNRATTDVRTAMNKNGGNMADAGSVSYLFTRKGVAVLDKGENTEDDILLAVLDAGAEEVNDLGEKFEVVCESSDINAVRDALKEAEIDYDSIELDFRASMEVPADATTAKKVFNLIDALEDSDDVQNVFTNMNVSEDVLAELDSE.

The interval 1-22 (MAGHSKWATTKHKKAANDAKRG) is disordered.

It belongs to the TACO1 family.

The protein localises to the cytoplasm. The polypeptide is Probable transcriptional regulatory protein jk1057 (Corynebacterium jeikeium (strain K411)).